The following is a 447-amino-acid chain: Protein cereblon (447 aa).

2 stretches are compositionally biased toward acidic residues: residues 1-10 (MADDEGEEDP) and 25-34 (ESEEEDEMEL). The tract at residues 1 to 47 (MADDEGEEDPGINNMGNLLQVISSESEEEDEMELEDAKTADSESPNI) is disordered. A Lon N-terminal domain is found at 82–322 (IPVLPHVQVM…CELDIMSKCT (241 aa)). Residues 321-429 (CTSLCCKHCP…LTRSALQPRI (109 aa)) form the CULT domain. 2 residues coordinate Zn(2+): Cys-326 and Cys-329. (S)-thalidomide-binding residues include Trp-383 and Trp-389. Residues Cys-394 and Cys-397 each contribute to the Zn(2+) site.

Belongs to the CRBN family. As to quaternary structure, component of a DCX (DDB1-CUL4-X-box) protein ligase complex.

It localises to the cytoplasm. It is found in the nucleus. It participates in protein modification; protein ubiquitination. Its function is as follows. Substrate recognition component of a DCX (DDB1-CUL4-X-box) E3 protein ligase complex that mediates the ubiquitination and subsequent proteasomal degradation of target proteins, such as MEIS2. Normal degradation of key regulatory proteins is required for normal limb outgrowth and expression of the fibroblast growth factor FGF8. Maintains presynaptic glutamate release and consequently cognitive functions, such as memory and learning, by negatively regulating large-conductance calcium-activated potassium (BK) channels in excitatory neurons. Likely to function by regulating the assembly and neuronal surface expression of BK channels via its interaction with KCNT1. May also be involved in regulating anxiety-like behaviors via a BK channel-independent mechanism. The sequence is that of Protein cereblon (crbn) from Xenopus tropicalis (Western clawed frog).